The sequence spans 1009 residues: Cilia- and flagella-associated protein 70 (1009 aa).

A compositionally biased stretch (basic and acidic residues) spans 410–428 (NLKEDKPVKEKDIDGRPRP). A disordered region spans residues 410 to 457 (NLKEDKPVKEKDIDGRPRPGDVQAPSIKSQSSDTPLEGEPPLSHNPEG). TPR repeat units follow at residues 498–531 (PPLT…EYYR), 635–668 (SEQL…EPQN), 669–702 (LDHW…NQSH), 704–736 (HSLL…EPTN), 888–921 (HFIF…SPSC), 923–954 (TWLG…NNYN), and 956–988 (EVWA…KLKD).

Belongs to the CFAP70 family.

Its subcellular location is the cell projection. It is found in the cilium. The protein resides in the flagellum. The protein localises to the cytoplasm. It localises to the cytoskeleton. Its subcellular location is the flagellum basal body. It is found in the cilium axoneme. Axoneme-binding protein that plays a role in the regulation of ciliary motility and cilium length. This Macaca fascicularis (Crab-eating macaque) protein is Cilia- and flagella-associated protein 70.